Here is a 438-residue protein sequence, read N- to C-terminus: Probable tRNA pseudouridine synthase D (438 aa).

The active-site Nucleophile is aspartate 86. The TRUD domain occupies 165–390; it reads GVPNFFGIQR…SKGTRREVLL (226 aa).

Belongs to the pseudouridine synthase TruD family.

The enzyme catalyses uridine(13) in tRNA = pseudouridine(13) in tRNA. Could be responsible for synthesis of pseudouridine from uracil-13 in transfer RNAs. The protein is Probable tRNA pseudouridine synthase D of Methanosarcina mazei (strain ATCC BAA-159 / DSM 3647 / Goe1 / Go1 / JCM 11833 / OCM 88) (Methanosarcina frisia).